Consider the following 569-residue polypeptide: Arylsulfatase I (569 aa).

A signal peptide spans 1–23; the sequence is MHTLTGFSLVSLLSFGYLSWDWA. The Ca(2+) site is built by D55, D56, and C93. Catalysis depends on C93, which acts as the Nucleophile. C93 is subject to 3-oxoalanine (Cys). K147 lines the substrate pocket. H149 is an active-site residue. Residue H239 participates in substrate binding. N-linked (GlcNAc...) asparagine glycans are attached at residues N276 and N288. The Ca(2+) site is built by D297 and N298. A substrate-binding site is contributed by K315. N-linked (GlcNAc...) asparagine glycans are attached at residues N466 and N496. The tract at residues 510–539 is disordered; that stretch reads RAHPDFNGGAWGPWASDEEEEEEEGRARSF.

The protein belongs to the sulfatase family. Requires Ca(2+) as cofactor. In terms of processing, the oxidation of Cys-93 residue to 3-oxoalanine (also known as C(alpha)-formylglycine) by SUMF1/Sulfatase-modifying factor 1, seems critical for catalytic activity. As to expression, expressed in placenta, in embryonic stem cells, fetal eyes and lens.

The protein resides in the secreted. It localises to the endoplasmic reticulum. Functionally, displays arylsulfatase activity at neutral pH, when co-expressed with SUMF1; arylsulfatase activity is measured in the secretion medium of retinal cell line, but no activity is recorded when measured in cell extracts. Lacks arylsulfatase activity. The protein is Arylsulfatase I (ARSI) of Homo sapiens (Human).